The sequence spans 70 residues: DNA-directed RNA polymerase subunit omega (70 aa).

Belongs to the RNA polymerase subunit omega family. As to quaternary structure, the RNAP catalytic core consists of 2 alpha, 1 beta, 1 beta' and 1 omega subunit. When a sigma factor is associated with the core the holoenzyme is formed, which can initiate transcription.

The catalysed reaction is RNA(n) + a ribonucleoside 5'-triphosphate = RNA(n+1) + diphosphate. Promotes RNA polymerase assembly. Latches the N- and C-terminal regions of the beta' subunit thereby facilitating its interaction with the beta and alpha subunits. The protein is DNA-directed RNA polymerase subunit omega of Thermoanaerobacter pseudethanolicus (strain ATCC 33223 / 39E) (Clostridium thermohydrosulfuricum).